A 289-amino-acid chain; its full sequence is Acetylglutamate kinase (289 aa).

Residues 65–66 (GG), R87, and N187 each bind substrate.

The protein belongs to the acetylglutamate kinase family. ArgB subfamily.

The protein resides in the cytoplasm. The enzyme catalyses N-acetyl-L-glutamate + ATP = N-acetyl-L-glutamyl 5-phosphate + ADP. It participates in amino-acid biosynthesis; L-arginine biosynthesis; N(2)-acetyl-L-ornithine from L-glutamate: step 2/4. In terms of biological role, catalyzes the ATP-dependent phosphorylation of N-acetyl-L-glutamate. The polypeptide is Acetylglutamate kinase (Chromobacterium violaceum (strain ATCC 12472 / DSM 30191 / JCM 1249 / CCUG 213 / NBRC 12614 / NCIMB 9131 / NCTC 9757 / MK)).